The following is a 262-amino-acid chain: S-methyl-5'-thioadenosine phosphorylase (262 aa).

Residues serine 12, 54–55 (RH), and 87–88 (SA) each bind phosphate. Substrate is bound at residue methionine 185. Residue threonine 186 participates in phosphate binding. Residue 209–211 (DYD) coordinates substrate.

It belongs to the PNP/MTAP phosphorylase family. MTAP subfamily. As to quaternary structure, homohexamer. Dimer of a homotrimer.

The catalysed reaction is S-methyl-5'-thioadenosine + phosphate = 5-(methylsulfanyl)-alpha-D-ribose 1-phosphate + adenine. Its pathway is amino-acid biosynthesis; L-methionine biosynthesis via salvage pathway; S-methyl-5-thio-alpha-D-ribose 1-phosphate from S-methyl-5'-thioadenosine (phosphorylase route): step 1/1. Its function is as follows. Catalyzes the reversible phosphorylation of S-methyl-5'-thioadenosine (MTA) to adenine and 5-methylthioribose-1-phosphate. Involved in the breakdown of MTA, a major by-product of polyamine biosynthesis. Responsible for the first step in the methionine salvage pathway after MTA has been generated from S-adenosylmethionine. Has broad substrate specificity with 6-aminopurine nucleosides as preferred substrates. The sequence is that of S-methyl-5'-thioadenosine phosphorylase from Thermofilum pendens (strain DSM 2475 / Hrk 5).